We begin with the raw amino-acid sequence, 179 residues long: Large ribosomal subunit protein uL6 (179 aa).

It belongs to the universal ribosomal protein uL6 family. Part of the 50S ribosomal subunit.

This protein binds to the 23S rRNA, and is important in its secondary structure. It is located near the subunit interface in the base of the L7/L12 stalk, and near the tRNA binding site of the peptidyltransferase center. The chain is Large ribosomal subunit protein uL6 from Koribacter versatilis (strain Ellin345).